Reading from the N-terminus, the 207-residue chain is RNA chaperone ProQ (207 aa).

The disordered stretch occupies residues 100–156 (TLAESKAKVQARRKEQAQKARDEEKSKPKTKKAPQQRRANKPQAQKPAKQPVETRAL). Positions 111 to 126 (RRKEQAQKARDEEKSK) are enriched in basic and acidic residues. Over residues 127–139 (PKTKKAPQQRRAN) the composition is skewed to basic residues.

It belongs to the ProQ family.

Its subcellular location is the cytoplasm. In terms of biological role, RNA chaperone with significant RNA binding, RNA strand exchange and RNA duplexing activities. The chain is RNA chaperone ProQ from Vibrio vulnificus (strain CMCP6).